Here is a 401-residue protein sequence, read N- to C-terminus: Beta-ketoadipyl-CoA thiolase (401 aa).

The active-site Acyl-thioester intermediate is the Cys91. Catalysis depends on proton acceptor residues His357 and Cys387.

The protein belongs to the thiolase-like superfamily. Thiolase family.

The catalysed reaction is succinyl-CoA + acetyl-CoA = 3-oxoadipyl-CoA + CoA. Its pathway is aromatic compound metabolism; beta-ketoadipate pathway; acetyl-CoA and succinyl-CoA from 3-oxoadipate: step 2/2. Catalyzes thiolytic cleavage of beta-ketoadipyl-CoA to succinyl-CoA and acetyl-CoA. The sequence is that of Beta-ketoadipyl-CoA thiolase (pcaF) from Pseudomonas aeruginosa (strain ATCC 15692 / DSM 22644 / CIP 104116 / JCM 14847 / LMG 12228 / 1C / PRS 101 / PAO1).